Here is a 149-residue protein sequence, read N- to C-terminus: Transcriptional repressor NrdR (149 aa).

A zinc finger lies at 3–34 (CPFCGFEESKVVDSRSTDDNTTIRRRRECLKC). The ATP-cone domain maps to 49-139 (ILVIKKDLTR…VYRQFKDIDT (91 aa)).

This sequence belongs to the NrdR family. The cofactor is Zn(2+).

In terms of biological role, negatively regulates transcription of bacterial ribonucleotide reductase nrd genes and operons by binding to NrdR-boxes. The polypeptide is Transcriptional repressor NrdR (Clostridium beijerinckii (strain ATCC 51743 / NCIMB 8052) (Clostridium acetobutylicum)).